A 100-amino-acid polypeptide reads, in one-letter code: Urease subunit gamma (100 aa).

The protein belongs to the urease gamma subunit family. As to quaternary structure, heterotrimer of UreA (gamma), UreB (beta) and UreC (alpha) subunits. Three heterotrimers associate to form the active enzyme.

Its subcellular location is the cytoplasm. The enzyme catalyses urea + 2 H2O + H(+) = hydrogencarbonate + 2 NH4(+). Its pathway is nitrogen metabolism; urea degradation; CO(2) and NH(3) from urea (urease route): step 1/1. The protein is Urease subunit gamma of Acinetobacter baumannii (strain AB307-0294).